We begin with the raw amino-acid sequence, 449 residues long: MKTLFVLFLLLLCVFAINANQEEENLPQSHHNLLHKVQQWRTSLKESSAAELKLSSAIIMAGVLCFLAALISSAGGIGGGGLFIPIMTIVAGVDLKTASSFSAFMVTGGSIANVISNLFGGKALLDYDLALLLEPCMLLGVSIGVICNRVLPEWLITVLFAVFLAWSSLKTCRSGVKFWKLESEIARESGHGRPERGQGQIEEETKNLKAPLLEAQATKNKSKIPWTKLGVLVIVWASFFVIYLLRGNKDGKGIITIKPCGVEYWILLSLQIPLALIFTKLALSRTESRQEQSPNDQKNQEGTRLDKSTRLKFPAMSFLAGLLGGIFGIGGGMLISPLLLQSGIPPQITAATTSFMVFFSATMSAVQYLLLGMQNTDTAYVFSFICFLASLLGLVLVQKAVAQFGRASIIVFSVGTVMSLSTVLMTSFGALDVWTDYVAGKDMGFKLPC.

Transmembrane regions (helical) follow at residues 1-21, 57-77, 78-98, 101-121, 127-147, 150-170, 224-244, 259-279, 315-335, 353-373, 378-398, and 409-429; these read MKTLFVLFLLLLCVFAINANQ, AIIMAGVLCFLAALISSAGGI, GGGGLFIPIMTIVAGVDLKTA, FSAFMVTGGSIANVISNLFGG, YDLALLLEPCMLLGVSIGVIC, VLPEWLITVLFAVFLAWSSLK, IPWTKLGVLVIVWASFFVIYL, PCGVEYWILLSLQIPLALIFT, AMSFLAGLLGGIFGIGGGMLI, TSFMVFFSATMSAVQYLLLGM, TAYVFSFICFLASLLGLVLVQ, and IIVFSVGTVMSLSTVLMTSFG.

The protein belongs to the 4-toluene sulfonate uptake permease (TSUP) (TC 2.A.102) family.

The protein resides in the membrane. This Arabidopsis thaliana (Mouse-ear cress) protein is Sulfite exporter TauE/SafE family protein 5.